The chain runs to 62 residues: Potassium channel toxin gamma-KTx 1.1 (62 aa).

Positions 1–20 (MKVLILIMIIASLMIMGVEM) are cleaved as a signal peptide. Cystine bridges form between Cys-25/Cys-43, Cys-31/Cys-54, Cys-40/Cys-59, and Cys-44/Cys-61.

The protein belongs to the ergtoxin family. Gamma-KTx 1 subfamily. In terms of processing, after protein storage at -20 Celsius degrees during a couple of months, the Met-55 of a small number of toxins is naturally oxidized. This oxidized form is about three orders of magnitude less efficient (IC(50)=15 uM) than non-oxidized form. As to expression, expressed by the venom gland.

Its subcellular location is the secreted. Functionally, blocks human and rat Kv11.1/KCNH2/ERG1 and Kv11.3/KCNH7/ERG3, as well as rat (but not human) Kv11.2/KCNH6/ERG2 by binding to channel outer vestibule (S5P domain) with a 1:1 stoichiometry. Inhibition data are the following: hERG1 (reversible, IC(50)~7 nM), rERG1 (reversible, Kd=6.8 nM), rERG2 (irreversible, Kd=2.8 nM), hERG3 (irreversible, Kd=4.05 nM) and rERG3 (reversible, Kd=38.1 nM) potassium channels. The toxin potency is not affected by elevating potassium ion concentration from 2 to 98 mM. This toxin only blocks channels in a closed state. At high toxin concentrations, block of Kv11.1/KCNH2/ERG1 macroscopic current is incomplete (93.5%). This suggests a kinetic mechanism model with two different states of toxin-channel binding (T+C=TC*=TC; in the TC* state, the toxin binds the channel but does not occlude the pore, whereas in the TC state the toxin binds and occludes the pore). In this model, incomplete block is explained by the relatively fast dissociation rate from the blocked channel conformation (TC) relative to the rate of conversion of the toxin-channel encounter complex (TC*) to the blocked channel conformation (TC). This is Potassium channel toxin gamma-KTx 1.1 from Centruroides noxius (Mexican scorpion).